The sequence spans 329 residues: Neuropeptides B/W receptor type 1 (329 aa).

Topologically, residues 1 to 39 are extracellular; sequence MHNLSLFEPGRGNVSCGGPFLGCPNESNPAPLPLPQPLA. N-linked (GlcNAc...) asparagine glycans are attached at residues Asn3, Asn13, and Asn25. A helical transmembrane segment spans residues 40 to 63; sequence VAVPVVYGVICAVGLAGNSAVLYV. The Cytoplasmic portion of the chain corresponds to 64-74; the sequence is LLRTPRMKTVT. Residues 75–99 form a helical membrane-spanning segment; that stretch reads NVFILNLAIADELFTLVLPINIADF. Topologically, residues 100–114 are extracellular; it reads LLRRWPFGEVMCKLI. Cys111 and Cys190 are disulfide-bonded. The chain crosses the membrane as a helical span at residues 115 to 134; the sequence is VAVDQYNTFSSLYFLAVMSA. The Cytoplasmic segment spans residues 135-159; it reads DRYLVVLATAESRRVSGRTYGAARA. Residues 160-179 traverse the membrane as a helical segment; the sequence is VSLAVWALVTLVVLPFAVFA. The Extracellular portion of the chain corresponds to 180-204; it reads RLDEEQGRRQCVLVFPQPEAFWWRA. The helical transmembrane segment at 205-226 threads the bilayer; that stretch reads SRLYTLVLGFAIPVSTICALYI. Residues 227–250 lie on the Cytoplasmic side of the membrane; the sequence is TLLCRLRAIQLDSHAKALDRAKKR. A helical membrane pass occupies residues 251-275; that stretch reads VTLLVVAILAVCLLCWTPYHLSTIV. Residues 276 to 285 lie on the Extracellular side of the membrane; it reads ALTTDLPQTP. A helical transmembrane segment spans residues 286–300; it reads LVIGISYFITSLSYA. Over 301–329 the chain is Cytoplasmic; the sequence is NSCLNPFLYAFLDDSFRRSLRQLVSCRTA.

This sequence belongs to the G-protein coupled receptor 1 family.

The protein localises to the cell membrane. Functionally, interacts specifically with a number of opioid ligands. Receptor for neuropeptides B and W, which may be involved in neuroendocrine system regulation, food intake and the organization of other signals. The sequence is that of Neuropeptides B/W receptor type 1 (Npbwr1) from Rattus norvegicus (Rat).